We begin with the raw amino-acid sequence, 213 residues long: Transcriptional regulatory protein YdfI (213 aa).

The region spanning 3–118 is the Response regulatory domain; the sequence is KVLIVDDHLV…TLFHTMDAAI (116 aa). Asp54 bears the 4-aspartylphosphate mark. In terms of domain architecture, HTH luxR-type spans 142-207; it reads KQRNETQLTE…EAVTIAMQKG (66 aa). The segment at residues 166-185 is a DNA-binding region (H-T-H motif); it reads SKAIAFDLGVSERTVKSRLT.

In terms of processing, phosphorylated by YdfH.

It is found in the cytoplasm. Its function is as follows. Member of the two-component regulatory system YdfH/YdfI. Regulates the transcription of ydfJ by binding to its promoter region. The polypeptide is Transcriptional regulatory protein YdfI (ydfI) (Bacillus subtilis (strain 168)).